We begin with the raw amino-acid sequence, 219 residues long: Ribosome maturation factor RimP (219 aa).

The tract at residues 195–219 is disordered; sequence EGRIPGDDLGAEPEDVASTETQEKK.

The protein belongs to the RimP family.

The protein resides in the cytoplasm. Functionally, required for maturation of 30S ribosomal subunits. In Brucella abortus (strain S19), this protein is Ribosome maturation factor RimP.